The sequence spans 194 residues: Mu-like prophage FluMu protein gp37 (194 aa).

This sequence to phage Mu protein gp37.

The protein is Mu-like prophage FluMu protein gp37 of Haemophilus influenzae (strain ATCC 51907 / DSM 11121 / KW20 / Rd).